The chain runs to 136 residues: Pterin-4-alpha-carbinolamine dehydratase 2 (136 aa).

N6-acetyllysine; alternate occurs at positions 120, 124, and 131. Lys120, Lys124, and Lys131 each carry N6-succinyllysine; alternate.

This sequence belongs to the pterin-4-alpha-carbinolamine dehydratase family. As to quaternary structure, homotetramer. Interacts with DYRK1B.

The enzyme catalyses (4aS,6R)-4a-hydroxy-L-erythro-5,6,7,8-tetrahydrobiopterin = (6R)-L-erythro-6,7-dihydrobiopterin + H2O. In terms of biological role, involved in tetrahydrobiopterin biosynthesis. Seems to both prevent the formation of 7-pterins and accelerate the formation of quinonoid-BH2. Its function is as follows. Regulates the dimerization of homeodomain protein HNF-1-alpha and enhances its transcriptional activity. The protein is Pterin-4-alpha-carbinolamine dehydratase 2 (Pcbd2) of Mus musculus (Mouse).